Consider the following 77-residue polypeptide: U8-lycotoxin-Ls1d (77 aa).

An N-terminal signal peptide occupies residues M1–A20. A propeptide spanning residues Q21–K26 is cleaved from the precursor.

It belongs to the neurotoxin 19 (CSTX) family. 08 (U8-Lctx) subfamily. Contains 4 disulfide bonds. As to expression, expressed by the venom gland.

It is found in the secreted. The protein is U8-lycotoxin-Ls1d of Lycosa singoriensis (Wolf spider).